Consider the following 255-residue polypeptide: Anamorsin homolog (255 aa).

The tract at residues 1 to 163 (MPKETLVVSK…VRPNWKSKTD (163 aa)) is N-terminal SAM-like domain. The segment at 164 to 185 (KKSPSMIDAAPIDGYISKAPDY) is linker. 4 residues coordinate [2Fe-2S] cluster: C188, C195, C198, and C200. The fe-S binding site A stretch occupies residues 188 to 200 (CSTKPRACANCTC). Residues C224, C227, C235, and C238 each contribute to the [4Fe-4S] cluster site. 2 consecutive short sequence motifs (cx2C motif) follow at residues 224 to 227 (CGNC) and 235 to 238 (CESC). The fe-S binding site B stretch occupies residues 224–238 (CGNCYLGDAFRCESC).

Belongs to the anamorsin family. As to quaternary structure, monomer. The cofactor is [2Fe-2S] cluster. [4Fe-4S] cluster is required as a cofactor.

It localises to the cytoplasm. The protein resides in the mitochondrion intermembrane space. Functionally, component of the cytosolic iron-sulfur (Fe-S) protein assembly (CIA) machinery. Required for the maturation of extramitochondrial Fe-S proteins. Part of an electron transfer chain functioning in an early step of cytosolic Fe-S biogenesis, facilitating the de novo assembly of a [4Fe-4S] cluster on the cytosolic Fe-S scaffold complex. Electrons are transferred from NADPH via a FAD- and FMN-containing diflavin oxidoreductase. Together with the diflavin oxidoreductase, also required for the assembly of the diferric tyrosyl radical cofactor of ribonucleotide reductase (RNR), probably by providing electrons for reduction during radical cofactor maturation in the catalytic small subunit. This chain is Anamorsin homolog, found in Theileria annulata.